Consider the following 341-residue polypeptide: UDP-3-O-acylglucosamine N-acyltransferase (341 aa).

H236 functions as the Proton acceptor in the catalytic mechanism.

Belongs to the transferase hexapeptide repeat family. LpxD subfamily. Homotrimer.

The catalysed reaction is a UDP-3-O-[(3R)-3-hydroxyacyl]-alpha-D-glucosamine + a (3R)-hydroxyacyl-[ACP] = a UDP-2-N,3-O-bis[(3R)-3-hydroxyacyl]-alpha-D-glucosamine + holo-[ACP] + H(+). The protein operates within bacterial outer membrane biogenesis; LPS lipid A biosynthesis. Functionally, catalyzes the N-acylation of UDP-3-O-acylglucosamine using 3-hydroxyacyl-ACP as the acyl donor. Is involved in the biosynthesis of lipid A, a phosphorylated glycolipid that anchors the lipopolysaccharide to the outer membrane of the cell. In Lawsonia intracellularis (strain PHE/MN1-00), this protein is UDP-3-O-acylglucosamine N-acyltransferase.